We begin with the raw amino-acid sequence, 342 residues long: Endolytic peptidoglycan transglycosylase RlpA (342 aa).

Residues 1 to 26 (MSKRVRSSLILPAVCGLGLAAVLLSS) form the signal peptide. A lipid anchor (N-palmitoyl cysteine) is attached at C27. Residue C27 is the site of S-diacylglycerol cysteine attachment. The 82-residue stretch at 261 to 342 (SLPADGLYLQ…LGQPTLVRPD (82 aa)) folds into the SPOR domain.

The protein belongs to the RlpA family.

It localises to the cell membrane. Its function is as follows. Lytic transglycosylase with a strong preference for naked glycan strands that lack stem peptides. The protein is Endolytic peptidoglycan transglycosylase RlpA of Pseudomonas aeruginosa (strain ATCC 15692 / DSM 22644 / CIP 104116 / JCM 14847 / LMG 12228 / 1C / PRS 101 / PAO1).